Reading from the N-terminus, the 164-residue chain is UPF0304 protein PC1_2778 (164 aa).

It belongs to the UPF0304 family.

The polypeptide is UPF0304 protein PC1_2778 (Pectobacterium carotovorum subsp. carotovorum (strain PC1)).